Reading from the N-terminus, the 616-residue chain is Chaperone protein HscA (616 aa).

Belongs to the heat shock protein 70 family.

Its function is as follows. Chaperone involved in the maturation of iron-sulfur cluster-containing proteins. Has a low intrinsic ATPase activity which is markedly stimulated by HscB. Involved in the maturation of IscU. This chain is Chaperone protein HscA, found in Pectobacterium atrosepticum (strain SCRI 1043 / ATCC BAA-672) (Erwinia carotovora subsp. atroseptica).